We begin with the raw amino-acid sequence, 29 residues long: Dermaseptin-J9 (29 aa).

As to expression, expressed by the skin glands.

The protein localises to the secreted. Functionally, has antimicrobial activity. In Phasmahyla jandaia (Jandaia leaf frog), this protein is Dermaseptin-J9.